Consider the following 364-residue polypeptide: UDP-N-acetylglucosamine--N-acetylmuramyl-(pentapeptide) pyrophosphoryl-undecaprenol N-acetylglucosamine transferase (364 aa).

Residues Thr-10–Gly-12, Asn-124, Arg-165, Ser-193, Ile-248, and Gln-293 contribute to the UDP-N-acetyl-alpha-D-glucosamine site.

It belongs to the glycosyltransferase 28 family. MurG subfamily.

The protein resides in the cell inner membrane. It carries out the reaction di-trans,octa-cis-undecaprenyl diphospho-N-acetyl-alpha-D-muramoyl-L-alanyl-D-glutamyl-meso-2,6-diaminopimeloyl-D-alanyl-D-alanine + UDP-N-acetyl-alpha-D-glucosamine = di-trans,octa-cis-undecaprenyl diphospho-[N-acetyl-alpha-D-glucosaminyl-(1-&gt;4)]-N-acetyl-alpha-D-muramoyl-L-alanyl-D-glutamyl-meso-2,6-diaminopimeloyl-D-alanyl-D-alanine + UDP + H(+). The protein operates within cell wall biogenesis; peptidoglycan biosynthesis. Functionally, cell wall formation. Catalyzes the transfer of a GlcNAc subunit on undecaprenyl-pyrophosphoryl-MurNAc-pentapeptide (lipid intermediate I) to form undecaprenyl-pyrophosphoryl-MurNAc-(pentapeptide)GlcNAc (lipid intermediate II). The sequence is that of UDP-N-acetylglucosamine--N-acetylmuramyl-(pentapeptide) pyrophosphoryl-undecaprenol N-acetylglucosamine transferase from Geobacter metallireducens (strain ATCC 53774 / DSM 7210 / GS-15).